A 669-amino-acid chain; its full sequence is Cysteine-rich receptor-like protein kinase 34 (669 aa).

Residues 1–23 (MKLKISFLPTFLIFLISLDSVTA) form the signal peptide. Gnk2-homologous domains are found at residues 24–123 (QEIC…NVSF) and 133–246 (ETLY…LYPY). The Extracellular segment spans residues 24–285 (QEICFSGFFK…SDRANTTIKG (262 aa)). 8 N-linked (GlcNAc...) asparagine glycosylation sites follow: asparagine 35, asparagine 52, asparagine 103, asparagine 120, asparagine 147, asparagine 172, asparagine 252, and asparagine 280. Residues 286-306 (IIVAIVVPIIVILVSLVVLLV) traverse the membrane as a helical segment. The Cytoplasmic portion of the chain corresponds to 307–669 (VCRRKKSYKT…DASITEFYPR (363 aa)). The Protein kinase domain maps to 345 to 624 (FSDSNMIGRG…MMLTSSTTTL (280 aa)). ATP-binding positions include 351–359 (IGRGGFGEV) and lysine 373. Tyrosine 418 carries the phosphotyrosine modification. Aspartate 470 acts as the Proton acceptor in catalysis. Serine 474 bears the Phosphoserine mark. Phosphothreonine is present on threonine 510. Tyrosine 518 carries the post-translational modification Phosphotyrosine.

The protein belongs to the protein kinase superfamily. Ser/Thr protein kinase family. CRK subfamily.

The protein localises to the membrane. The catalysed reaction is L-seryl-[protein] + ATP = O-phospho-L-seryl-[protein] + ADP + H(+). It catalyses the reaction L-threonyl-[protein] + ATP = O-phospho-L-threonyl-[protein] + ADP + H(+). The chain is Cysteine-rich receptor-like protein kinase 34 from Arabidopsis thaliana (Mouse-ear cress).